Consider the following 60-residue polypeptide: Large ribosomal subunit protein bL32 (60 aa).

Positions 1 to 46 are disordered; that stretch reads MAVQQNKKSPSKRGMHRSHNALNTPGTAIEPTTGEVHLRHHISPTG. Positions 9-19 are enriched in basic residues; it reads SPSKRGMHRSH.

Belongs to the bacterial ribosomal protein bL32 family.

The chain is Large ribosomal subunit protein bL32 from Leptothrix cholodnii (strain ATCC 51168 / LMG 8142 / SP-6) (Leptothrix discophora (strain SP-6)).